Here is a 359-residue protein sequence, read N- to C-terminus: Biotin synthase (359 aa).

The disordered stretch occupies residues 1 to 22 (MQSTPLNFVPNAAKAPVTPGQA). A Radical SAM core domain is found at 58–285 (NAVQLSTLLS…KAMVRLSAGR (228 aa)). Residues C73, C77, and C80 each contribute to the [4Fe-4S] cluster site. Residues C117, C148, C208, and R280 each contribute to the [2Fe-2S] cluster site.

Belongs to the radical SAM superfamily. Biotin synthase family. In terms of assembly, homodimer. [4Fe-4S] cluster is required as a cofactor. It depends on [2Fe-2S] cluster as a cofactor.

It catalyses the reaction (4R,5S)-dethiobiotin + (sulfur carrier)-SH + 2 reduced [2Fe-2S]-[ferredoxin] + 2 S-adenosyl-L-methionine = (sulfur carrier)-H + biotin + 2 5'-deoxyadenosine + 2 L-methionine + 2 oxidized [2Fe-2S]-[ferredoxin]. It participates in cofactor biosynthesis; biotin biosynthesis; biotin from 7,8-diaminononanoate: step 2/2. In terms of biological role, catalyzes the conversion of dethiobiotin (DTB) to biotin by the insertion of a sulfur atom into dethiobiotin via a radical-based mechanism. In Ralstonia pickettii (strain 12J), this protein is Biotin synthase.